The primary structure comprises 235 residues: Isoprenyl transferase (235 aa).

The active site involves Asp-21. Mg(2+) is bound at residue Asp-21. Substrate is bound by residues 22 to 25 (GNAR), Trp-26, Lys-34, His-38, and 66 to 68 (SSE). The Proton acceptor role is filled by Asn-69. Residues Trp-70, Arg-72, Arg-183, and 189-191 (RIS) contribute to the substrate site. Position 202 (Glu-202) interacts with Mg(2+).

This sequence belongs to the UPP synthase family. In terms of assembly, homodimer. Requires Mg(2+) as cofactor.

Functionally, catalyzes the condensation of isopentenyl diphosphate (IPP) with allylic pyrophosphates generating different type of terpenoids. The polypeptide is Isoprenyl transferase (Rickettsia conorii (strain ATCC VR-613 / Malish 7)).